The following is a 373-amino-acid chain: MANTTGEPEEVSGALSLPSASAYVKLVLLGLIMCVSLAGNAILSLLVLKERALHKAPYYFLLDLCLADGIRSAICFPFVLASVRHGSSWTFSALSCKIVAFMAVLFCFHAAFMLFCISVTRYMAIAHHRFYAKRMTLWTCAAVICMAWTLSVAMAFPPVFDVGTYKFIREEDQCIFEHRYFKANDTLGFMLMLAVLMAATHAVYGKLLLFEYRHRKMKPVQMVPAISQNWTFHGPGATGQAAANWIAGFGRGPMPPTLLGIRQNGHAASRRLLGMDEVKGEKQLGRMFYAITLLFLLLWSPYIVACYWRVFVKACAVPHRYLATAVWMSFAQAAVNPIVCFLLNKDLKKCLRTHAPCWGTGGAPAPREPYCVM.

Over 1–26 (MANTTGEPEEVSGALSLPSASAYVKL) the chain is Extracellular. The N-linked (GlcNAc...) asparagine glycan is linked to N3. Residues 27-47 (VLLGLIMCVSLAGNAILSLLV) traverse the membrane as a helical segment. Topologically, residues 48-59 (LKERALHKAPYY) are cytoplasmic. Residues 60–80 (FLLDLCLADGIRSAICFPFVL) traverse the membrane as a helical segment. The Extracellular portion of the chain corresponds to 81 to 97 (ASVRHGSSWTFSALSCK). A disulfide bridge connects residues C96 and C174. The chain crosses the membrane as a helical span at residues 98–118 (IVAFMAVLFCFHAAFMLFCIS). The Cytoplasmic segment spans residues 119 to 139 (VTRYMAIAHHRFYAKRMTLWT). A helical transmembrane segment spans residues 140 to 160 (CAAVICMAWTLSVAMAFPPVF). Residues 161–188 (DVGTYKFIREEDQCIFEHRYFKANDTLG) lie on the Extracellular side of the membrane. The N-linked (GlcNAc...) asparagine glycan is linked to N184. A helical membrane pass occupies residues 189-209 (FMLMLAVLMAATHAVYGKLLL). The Cytoplasmic portion of the chain corresponds to 210–287 (FEYRHRKMKP…VKGEKQLGRM (78 aa)). A helical membrane pass occupies residues 288 to 308 (FYAITLLFLLLWSPYIVACYW). Residues 309–322 (RVFVKACAVPHRYL) are Extracellular-facing. Residues 323–343 (ATAVWMSFAQAAVNPIVCFLL) traverse the membrane as a helical segment. Over 344 to 373 (NKDLKKCLRTHAPCWGTGGAPAPREPYCVM) the chain is Cytoplasmic.

The protein belongs to the G-protein coupled receptor 1 family. Expressed in the ovary, specifically in granulosa cells of follicles that have passed the primary stage and in oocytes (at protein level). Expressed in preadipocytes.

The protein resides in the cell membrane. Is a receptor for the SMIM20 derived peptides Phoenixin-14 and Phoenixin-20. It mediates the Phoenixin-14 and Phoenixin-20 augmentation of gonadotropin-releasing hormone (GNRH) signaling in the hypothalamus and pituitary gland. In the ovary, it mediates the effects of Phoenixin-14 and Phoenixin-20 induced granulosa cell proliferation during follicular growth. The polypeptide is Probable G-protein coupled receptor 173 (Gpr173) (Mus musculus (Mouse)).